Consider the following 118-residue polypeptide: Secreted effector CSEP0064 (118 aa).

The signal sequence occupies residues 1–21 (MRPFQLLSALAIFINLEAVEA). A disulfide bridge links Cys-27 with Cys-113.

As to quaternary structure, interacts in planta with the pathogenesis-related protein PR10.

The protein localises to the secreted. It localises to the host cell. Functionally, secreted effector that increases susceptibility to infection in both monocotyledonous and dicotyledonous plants. Non-catalytic homolog of fungal RNases that binds host RNA and inhibits the degradation of host ribosomal RNA induced by ribosome-inactivating proteins (RIPs), preventing host cell death, an inviable interaction and demise of the fungus. The chain is Secreted effector CSEP0064 from Blumeria graminis f. sp. hordei (strain DH14) (Barley powdery mildew).